We begin with the raw amino-acid sequence, 383 residues long: Putative glutamate--cysteine ligase 2-1 (383 aa).

The protein belongs to the glutamate--cysteine ligase type 2 family. YbdK subfamily.

It carries out the reaction L-cysteine + L-glutamate + ATP = gamma-L-glutamyl-L-cysteine + ADP + phosphate + H(+). Functionally, ATP-dependent carboxylate-amine ligase which exhibits weak glutamate--cysteine ligase activity. This is Putative glutamate--cysteine ligase 2-1 from Arthrobacter sp. (strain FB24).